The sequence spans 509 residues: Photosystem II CP47 reaction center protein (509 aa).

A run of 6 helical transmembrane segments spans residues Ser21–Ser36, Ile101–Trp115, Gly140–Phe156, Ile203–Asn218, Val237–Val252, and Asn457–Arg472.

The protein belongs to the PsbB/PsbC family. PsbB subfamily. PSII is composed of 1 copy each of membrane proteins PsbA, PsbB, PsbC, PsbD, PsbE, PsbF, PsbH, PsbI, PsbJ, PsbK, PsbL, PsbM, PsbT, PsbY, PsbZ, Psb30/Ycf12, at least 3 peripheral proteins of the oxygen-evolving complex and a large number of cofactors. It forms dimeric complexes. The cofactor is Binds multiple chlorophylls. PSII binds additional chlorophylls, carotenoids and specific lipids..

It is found in the plastid. Its subcellular location is the chloroplast thylakoid membrane. One of the components of the core complex of photosystem II (PSII). It binds chlorophyll and helps catalyze the primary light-induced photochemical processes of PSII. PSII is a light-driven water:plastoquinone oxidoreductase, using light energy to abstract electrons from H(2)O, generating O(2) and a proton gradient subsequently used for ATP formation. This Cyanidium caldarium (Red alga) protein is Photosystem II CP47 reaction center protein.